The following is a 396-amino-acid chain: ATP synthase subunit beta, chloroplastic (396 aa).

Residue 74–81 (GGAGVGKT) participates in ATP binding.

This sequence belongs to the ATPase alpha/beta chains family. F-type ATPases have 2 components, CF(1) - the catalytic core - and CF(0) - the membrane proton channel. CF(1) has five subunits: alpha(3), beta(3), gamma(1), delta(1), epsilon(1). CF(0) has four main subunits: a(1), b(1), b'(1) and c(9-12).

Its subcellular location is the plastid. It is found in the chloroplast thylakoid membrane. The enzyme catalyses ATP + H2O + 4 H(+)(in) = ADP + phosphate + 5 H(+)(out). Functionally, produces ATP from ADP in the presence of a proton gradient across the membrane. The catalytic sites are hosted primarily by the beta subunits. The protein is ATP synthase subunit beta, chloroplastic of Adiantum raddianum (Maidenhair fern).